The sequence spans 417 residues: Type IV inositol polyphosphate 5-phosphatase 9 (417 aa).

Catalytic stretches follow at residues 258-273 and 339-354; these read DRVIFLGDLNYRISLP and KKRAPAWCDRIIWYGN.

The protein belongs to the inositol polyphosphate 5-phosphatase family. Specifically expressed in roots.

It catalyses the reaction a 1,2-diacyl-sn-glycero-3-phospho-(1D-myo-inositol-4,5-bisphosphate) + H2O = a 1,2-diacyl-sn-glycero-3-phospho-(1D-myo-inositol 4-phosphate) + phosphate. The enzyme catalyses a 1,2-diacyl-sn-glycero-3-phospho-(1D-myo-inositol-3,4,5-trisphosphate) + H2O = a 1,2-diacyl-sn-glycero-3-phospho-(1D-myo-inositol-3,4-bisphosphate) + phosphate. Has phosphatase activity toward PtdIns(4,5)P2 and at a lower extent toward PtdIns(3,4,5)P3 but not toward Ins(1,4,5)P3. Functions in salt stress response by regulating reactive oxygen species (ROS) production, endocytosis, Ca(2+) influx and stress-responsive genes expression. In Arabidopsis thaliana (Mouse-ear cress), this protein is Type IV inositol polyphosphate 5-phosphatase 9.